Here is a 283-residue protein sequence, read N- to C-terminus: Putative sugar uptake protein BA_0200/GBAA_0200/BAS0200 (283 aa).

10 helical membrane-spanning segments follow: residues 4-21, 26-48, 52-71, 84-106, 110-132, 151-173, 178-195, 208-230, 234-253, and 260-279; these read LLALLPAIAWGNILLVSV, GAYSQTVGMTIGALFFATIMYVF, ALTMTILIVGFISGLFWALG, VSTTVTISTGMQLVATSIFGVIA, WTTTTTIILGTIAILLIVVGVVF, LLTLIVSTFGYLVYVIIIRWYNI, AILPQAVGMFVGAVVLTS, ALSGLLWGTGNLFLLLSLPRVGV, FPLSQTGIVISTFGAIVFLG, and QLIFIALGSVLIIGGAVLLG.

This sequence belongs to the GRP transporter (TC 2.A.7.5) family.

Its subcellular location is the cell membrane. This is Putative sugar uptake protein BA_0200/GBAA_0200/BAS0200 from Bacillus anthracis.